Reading from the N-terminus, the 374-residue chain is MLPFLSMLVLLVQPLGNLGAEMKSLSQRSVPNTCTLVMCSPTENGLPGRDGRDGREGPRGEKGDPGLPGPMGLSGLQGPTGPVGPKGENGSAGEPGPKGERGLSGPPGLPGIPGPAGKEGPSGKQGNIGPQGKPGPKGEAGPKGEVGAPGMQGSTGAKGSTGPKGERGAPGVQGAPGNAGAAGPAGPAGPQGAPGSRGPPGLKGDRGVPGDRGIKGESGLPDSAALRQQMEALKGKLQRLEVAFSHYQKAALFPDGRSVGDKIFRTADSEKPFEDAQEMCKQAGGQLASPRSATENAAIQQLITAHNKAAFLSMTDVGTEGKFTYPTGEPLVYSNWAPGEPNNNGGAENCVEIFTNGQWNDKACGEQRLVICEF.

Residues 1–19 (MLPFLSMLVLLVQPLGNLG) form the signal peptide. S-nitrosocysteine is present on residues Cys-34 and Cys-39. The segment at 38–222 (MCSPTENGLP…GIKGESGLPD (185 aa)) is disordered. The Collagen-like domain maps to 45–221 (GLPGRDGRDG…RGIKGESGLP (177 aa)). The span at 49-64 (RDGRDGREGPRGEKGD) shows a compositional bias: basic and acidic residues. A compositionally biased stretch (low complexity) spans 70 to 79 (PMGLSGLQGP). N-linked (GlcNAc...) asparagine glycosylation is present at Asn-89. Low complexity-rich tracts occupy residues 137-149 (KGEAGPKGEVGAP) and 169-200 (APGVQGAPGNAGAAGPAGPAGPQGAPGSRGPP). Residues 203 to 215 (KGDRGVPGDRGIK) are compositionally biased toward basic and acidic residues. Positions 222 to 253 (DSAALRQQMEALKGKLQRLEVAFSHYQKAALF) form a coiled coil. In terms of domain architecture, C-type lectin spans 259–374 (VGDKIFRTAD…GEQRLVICEF (116 aa)). Intrachain disulfides connect Cys-280–Cys-372 and Cys-350–Cys-364.

Belongs to the SFTPD family. In terms of assembly, oligomeric complex of 4 set of homotrimers. Post-translationally, S-nitrosylation at Cys-34 and Cys-39 alters the quaternary structure which results in a pro-inflammatory chemoattractive signaling activity with macrophages.

The protein localises to the secreted. It localises to the extracellular space. The protein resides in the extracellular matrix. It is found in the surface film. Functionally, contributes to the lung's defense against inhaled microorganisms, organic antigens and toxins. Interacts with compounds such as bacterial lipopolysaccharides, oligosaccharides and fatty acids and modulates leukocyte action in immune response. May participate in the extracellular reorganization or turnover of pulmonary surfactant. Binds strongly maltose residues and to a lesser extent other alpha-glucosyl moieties. The sequence is that of Pulmonary surfactant-associated protein D (Sftpd) from Mus musculus (Mouse).